Consider the following 288-residue polypeptide: Solute carrier family 25 member 45 (288 aa).

Solcar repeat units lie at residues 1–83 (MPVE…TLLV), 97–191 (PSYM…LCRQ), and 199–286 (PSSA…LLRW). The next 6 helical transmembrane spans lie at 6 to 26 (FVAG…FDTV), 63 to 83 (IASI…TLLV), 100 to 120 (MHIF…LAPF), 166 to 186 (GAWA…ITYE), 202 to 222 (ATVL…ATPL), and 266 to 286 (SARA…LLRW).

The protein belongs to the mitochondrial carrier (TC 2.A.29) family.

The protein localises to the mitochondrion inner membrane. The polypeptide is Solute carrier family 25 member 45 (SLC25A45) (Homo sapiens (Human)).